A 139-amino-acid chain; its full sequence is Trafficking protein particle complex subunit 2-like protein (139 aa).

This sequence belongs to the TRAPP small subunits family. Sedlin subfamily.

It localises to the cytoplasm. The protein localises to the perinuclear region. Its subcellular location is the endoplasmic reticulum. The protein resides in the golgi apparatus. Functionally, may play a role in vesicular transport from endoplasmic reticulum to Golgi. This Xenopus tropicalis (Western clawed frog) protein is Trafficking protein particle complex subunit 2-like protein (trappc2l).